The following is a 304-amino-acid chain: Protein ML (304 aa).

Blocks host IRF3 and IRF7, thereby inhibiting IFN-beta expression and activation of host antiviral state. The protein is Protein ML of Thogoto virus (isolate SiAr 126) (Tho).